Reading from the N-terminus, the 1753-residue chain is Negative regulator of sporulation PMD1 (1753 aa).

2 Kelch repeats span residues 143 to 198 (NIYI…VLNE) and 206 to 253 (KLII…KILV). Thr-298 bears the Phosphothreonine mark. A compositionally biased stretch (polar residues) spans 651-664 (TTKFGNSSQSSNGS). 2 disordered regions span residues 651-753 (TTKF…TTCS) and 771-807 (LGLS…CTLS). The span at 670-683 (SKNGNSKSNSNTSL) shows a compositional bias: low complexity. Polar residues-rich tracts occupy residues 690–699 (DFTSSTSSPK), 740–753 (TGTS…TTCS), 774–783 (SEQSGRSTRA), and 797–807 (NDGNDSNCTLS). The residue at position 838 (Ser-838) is a Phosphoserine. Disordered regions lie at residues 875–915 (IASP…LGSS), 938–957 (PLEP…SSLA), and 962–988 (FGRD…ARRI). The segment covering 880 to 900 (QSRQTSFASTASTASVVSSTS) has biased composition (low complexity). The segment covering 938–947 (PLEPLPPVPK) has biased composition (pro residues). Residues 979 to 988 (KSSSSDARRI) are compositionally biased toward low complexity. Ser-1289, Ser-1307, and Ser-1356 each carry phosphoserine. 3 disordered regions span residues 1312–1467 (SPAT…DLDS), 1604–1686 (PIFA…NKRF), and 1706–1753 (SAVN…GKRR). The span at 1344 to 1379 (VSRQQNFPRRSSSFTETVPTEPTRYNYQNLDSSKSN) shows a compositional bias: polar residues. Residues 1399 to 1430 (NFDKYKVETLQKRNSNDGKDLDRTNDPLKNRG) are compositionally biased toward basic and acidic residues. The segment covering 1653 to 1677 (IKFSQAPSTQISPRTSVTDFTASQQ) has biased composition (polar residues). At Ser-1664 the chain carries Phosphoserine. Residues 1711-1723 (GRKESEGHCEDRS) show a composition bias toward basic and acidic residues.

The protein resides in the cytoplasm. In terms of biological role, negatively regulates early sporulation-specific genes. Seems to exert its function by positively regulating the Ras/cAMP pathway. Required for growth under alkaline conditions. Acts synergetically with MDS3. The protein is Negative regulator of sporulation PMD1 (PMD1) of Saccharomyces cerevisiae (strain ATCC 204508 / S288c) (Baker's yeast).